We begin with the raw amino-acid sequence, 339 residues long: Glycerol-3-phosphate dehydrogenase [NAD(P)+] (339 aa).

NADPH-binding residues include Ser-15, Tyr-16, His-36, and Lys-110. Lys-110, Gly-139, and Thr-141 together coordinate sn-glycerol 3-phosphate. NADPH is bound at residue Ala-143. Positions 195, 248, 258, 259, and 260 each coordinate sn-glycerol 3-phosphate. The active-site Proton acceptor is the Lys-195. Arg-259 provides a ligand contact to NADPH. NADPH contacts are provided by Val-283 and Glu-285.

This sequence belongs to the NAD-dependent glycerol-3-phosphate dehydrogenase family.

The protein resides in the cytoplasm. It catalyses the reaction sn-glycerol 3-phosphate + NAD(+) = dihydroxyacetone phosphate + NADH + H(+). It carries out the reaction sn-glycerol 3-phosphate + NADP(+) = dihydroxyacetone phosphate + NADPH + H(+). Its pathway is membrane lipid metabolism; glycerophospholipid metabolism. Functionally, catalyzes the reduction of the glycolytic intermediate dihydroxyacetone phosphate (DHAP) to sn-glycerol 3-phosphate (G3P), the key precursor for phospholipid synthesis. This Salmonella agona (strain SL483) protein is Glycerol-3-phosphate dehydrogenase [NAD(P)+].